A 504-amino-acid polypeptide reads, in one-letter code: MNIDLKRTPLMVLGTSSGAGKTLIATAICRCLKRKGEQPIPFKGQNMSNNAWVDTKGREMAYSQALQSWSAGLEPSAEMNPVLLKPKGDCTSEVIHLGKSVGTSRAINYYEDWFDSGWEAIKKGLAILLKSKTDGRLILEGAGSPVEVNLQHKDLTNLKLAKYLNANCILVADIERGGVFAQIIGTIALMKPDEKKLIKGIIINRFRGDKALFETGVTWIEKETGIPVLGILPWLKEIFPPEDSLDLLERKQINQGAEIEIAIIKLPRISNFSDLDPFFSDSSIQMRWIEPGQELGEPDVLIIPGSKQTIKDLESLNKTGLSNQIKNYAKKGGNIFGICGGLQMLGKSLEDPHQQESINETSTSSNMGMNLLPIKTTFREIKHTSQREEKVSWPFSQNIKGFEMHYGESDLINNKDSEIISLFKNSSLGWVIEKKDKSFVGGTYLHGIFENDEWRRQWINKIRQKKGLNHLKIDEENNSDKRERLLDLLTDAFEKNINIDILIK.

A GATase cobBQ-type domain is found at 258-454 (EIEIAIIKLP…LHGIFENDEW (197 aa)). C339 serves as the catalytic Nucleophile. H446 is an active-site residue.

This sequence belongs to the CobB/CobQ family. CobQ subfamily.

The protein operates within cofactor biosynthesis; adenosylcobalamin biosynthesis. In terms of biological role, catalyzes amidations at positions B, D, E, and G on adenosylcobyrinic A,C-diamide. NH(2) groups are provided by glutamine, and one molecule of ATP is hydrogenolyzed for each amidation. The chain is Cobyric acid synthase from Prochlorococcus marinus (strain NATL2A).